A 156-amino-acid polypeptide reads, in one-letter code: Small ribosomal subunit protein uS7 (156 aa).

Belongs to the universal ribosomal protein uS7 family. In terms of assembly, part of the 30S ribosomal subunit. Contacts proteins S9 and S11.

Functionally, one of the primary rRNA binding proteins, it binds directly to 16S rRNA where it nucleates assembly of the head domain of the 30S subunit. Is located at the subunit interface close to the decoding center, probably blocks exit of the E-site tRNA. In Streptococcus pyogenes serotype M1, this protein is Small ribosomal subunit protein uS7.